The following is a 407-amino-acid chain: MLGMLRWTTAGESHGQALVATVEHMPAGVPVTKDEVTYQLARRRLGYGRGARMKFEQDKLTFLTGIRHGLTLGSPISIVIGNSEWPKWTTIMSSDALDMEDPENVAAMSSGRGAKLTRPRPGHADFAGMLKYGFDDARNVLERSSARETAARVAAATVARSFLRETLGVEVLSHVVSIGRSEPYEGPTPTFADITAIDESPVRSFGKEAEASMITEIEAAKKSGDTLGGIVEVIVEGLPIGLGSHISGEDRLDAQLAAALMGIQAIKGVEIGDGFEEARRRGSEAHDEMVRDEDGVYRTTNRAGGLEGGMTNGETLRVRAAMKPISTVPRALKTVDMATGDAATGIHQRSDVCAVPAAGVVAEAMVALVLARAVLNKFGGDSLEETTCNIRCYLERIGKRLEFNDGE.

Arg43 and Arg49 together coordinate NADP(+). FMN-binding positions include 143–145 (RSS), 264–265 (QA), Gly308, 323–327 (KPIST), and Arg349.

It belongs to the chorismate synthase family. Homotetramer. FMNH2 serves as cofactor.

It carries out the reaction 5-O-(1-carboxyvinyl)-3-phosphoshikimate = chorismate + phosphate. It functions in the pathway metabolic intermediate biosynthesis; chorismate biosynthesis; chorismate from D-erythrose 4-phosphate and phosphoenolpyruvate: step 7/7. Functionally, catalyzes the anti-1,4-elimination of the C-3 phosphate and the C-6 proR hydrogen from 5-enolpyruvylshikimate-3-phosphate (EPSP) to yield chorismate, which is the branch point compound that serves as the starting substrate for the three terminal pathways of aromatic amino acid biosynthesis. This reaction introduces a second double bond into the aromatic ring system. The chain is Chorismate synthase from Corynebacterium efficiens (strain DSM 44549 / YS-314 / AJ 12310 / JCM 11189 / NBRC 100395).